A 270-amino-acid chain; its full sequence is Tetraspanin-14 (270 aa).

Residues 1-17 (MHYYRYSNAKVSCWYKY) lie on the Cytoplasmic side of the membrane. A helical transmembrane segment spans residues 18–38 (LLFSYNIIFWLAGVVFLGVGL). The Extracellular segment spans residues 39-61 (WAWSEKGVLSDLTKVTRMHGIDP). A helical membrane pass occupies residues 62–82 (VVLVLMVGVVMFTLGFAGCVG). Residues 83-92 (ALRENICLLN) lie on the Cytoplasmic side of the membrane. A helical membrane pass occupies residues 93–113 (FFCGTIVLIFFLELAVAVLAF). At 114–232 (LFQDWVRDRF…QALESWLPRN (119 aa)) the chain is on the extracellular side. Residues 114-232 (LFQDWVRDRF…QALESWLPRN (119 aa)) form a necessary and sufficient for interaction with ADAM10 region. 4 cysteine pairs are disulfide-bonded: cysteine 153/cysteine 221, cysteine 154/cysteine 186, cysteine 170/cysteine 180, and cysteine 187/cysteine 200. The N-linked (GlcNAc...) asparagine glycan is linked to asparagine 169. A helical transmembrane segment spans residues 233–253 (IYIVAGVFIAISLLQIFGIFL). The Cytoplasmic portion of the chain corresponds to 254–270 (ARTLISDIEAVKAGHHF).

Belongs to the tetraspanin (TM4SF) family. In terms of assembly, interacts with ADAM10; the interaction promotes ADAM10 maturation and cell surface expression.

It localises to the cell membrane. Part of TspanC8 subgroup, composed of 6 members that interact with the transmembrane metalloprotease ADAM10. This interaction is required for ADAM10 exit from the endoplasmic reticulum and for enzymatic maturation and trafficking to the cell surface as well as substrate specificity. Different TspanC8/ADAM10 complexes have distinct substrates. Negatively regulates ADAM10-mediated cleavage of GP6. Promotes ADAM10-mediated cleavage of CDH5. This is Tetraspanin-14 from Homo sapiens (Human).